We begin with the raw amino-acid sequence, 444 residues long: Methylenetetrahydrofolate--tRNA-(uracil-5-)-methyltransferase TrmFO (444 aa).

9–14 serves as a coordination point for FAD; that stretch reads GAGMAG.

The protein belongs to the MnmG family. TrmFO subfamily. FAD serves as cofactor.

It localises to the cytoplasm. It catalyses the reaction uridine(54) in tRNA + (6R)-5,10-methylene-5,6,7,8-tetrahydrofolate + NADH + H(+) = 5-methyluridine(54) in tRNA + (6S)-5,6,7,8-tetrahydrofolate + NAD(+). It carries out the reaction uridine(54) in tRNA + (6R)-5,10-methylene-5,6,7,8-tetrahydrofolate + NADPH + H(+) = 5-methyluridine(54) in tRNA + (6S)-5,6,7,8-tetrahydrofolate + NADP(+). Its function is as follows. Catalyzes the folate-dependent formation of 5-methyl-uridine at position 54 (M-5-U54) in all tRNAs. The protein is Methylenetetrahydrofolate--tRNA-(uracil-5-)-methyltransferase TrmFO of Cereibacter sphaeroides (strain ATCC 17029 / ATH 2.4.9) (Rhodobacter sphaeroides).